A 265-amino-acid polypeptide reads, in one-letter code: Urease accessory protein UreH (265 aa).

Belongs to the UreD family. In terms of assembly, ureH, UreF and UreG form a complex that acts as a GTP-hydrolysis-dependent molecular chaperone, activating the urease apoprotein by helping to assemble the nickel containing metallocenter of UreC. The UreE protein probably delivers the nickel.

The protein resides in the cytoplasm. Functionally, required for maturation of urease via the functional incorporation of the urease nickel metallocenter. The sequence is that of Urease accessory protein UreH from Helicobacter pylori (strain J99 / ATCC 700824) (Campylobacter pylori J99).